The sequence spans 255 residues: Folate receptor beta (255 aa).

Residues 1 to 16 (MVWKWMPLLLLLVCVA) form the signal peptide. 8 disulfides stabilise this stretch: cysteine 31-cysteine 59, cysteine 51-cysteine 99, cysteine 60-cysteine 103, cysteine 83-cysteine 169, cysteine 90-cysteine 140, cysteine 129-cysteine 203, cysteine 133-cysteine 183, and cysteine 146-cysteine 163. 2 residues coordinate folate: aspartate 97 and tyrosine 101. The N-linked (GlcNAc...) asparagine glycan is linked to asparagine 115. Residues 118-122 (WRKER), 151-156 (HRGWDW), and serine 190 each bind folate. Residue asparagine 195 is glycosylated (N-linked (GlcNAc...) asparagine). Residue asparagine 230 is the site of GPI-anchor amidated asparagine attachment. A propeptide spans 231-255 (AGEMLHGTGGLLLSLALMLQLWLLG) (removed in mature form).

This sequence belongs to the folate receptor family. N-glycosylated. Expressed in placenta and hematopoietic cells. Expression is increased in malignant tissues.

Its subcellular location is the cell membrane. It localises to the secreted. Its function is as follows. Binds to folate and reduced folic acid derivatives and mediates delivery of 5-methyltetrahydrofolate and folate analogs into the interior of cells. Has high affinity for folate and folic acid analogs at neutral pH. Exposure to slightly acidic pH after receptor endocytosis triggers a conformation change that strongly reduces its affinity for folates and mediates their release. This Homo sapiens (Human) protein is Folate receptor beta (FOLR2).